A 1288-amino-acid polypeptide reads, in one-letter code: Disease resistance protein RRS1 (1288 aa).

Residues 5-146 form the TIR domain; the sequence is EKDEEFVCIS…EIVRDVYETH (142 aa). Positions 25–26 are important for interaction with RPS4; it reads SH. Positions 170 to 421 constitute an NB-ARC domain; sequence IGIRCVGIWG…LLEGCGFFPH (252 aa). 179 to 186 contributes to the ATP binding site; it reads GMPGIGKT. LRR repeat units lie at residues 498 to 522, 535 to 553, 554 to 575, 577 to 598, 621 to 646, 665 to 688, 697 to 720, 740 to 764, 766 to 791, 792 to 807, 808 to 829, and 830 to 852; these read SEEI…AFKN, NPEV…HSLP, NELR…NFDP, HLVE…TKNL, AENL…RLLR, PPNI…TVKP, LTEI…NSSC, LPNM…SIQG, PRFL…SLEI, LNAH…NMAN, LEFL…QGFP, and RNLK…PLSL. Positions 986–1003 match the Nuclear localization signal motif; it reads RKFHCWAPWQVVPKVRKD. The segment at residues 1202–1270 is a DNA-binding region (WRKY); it reads IPAIDEGDLW…YLSEHNHPRP (69 aa). A disordered region spans residues 1267 to 1288; that stretch reads HPRPTKRKALADSTRSTSSSIC. The span at 1279 to 1288 shows a compositional bias: polar residues; it reads STRSTSSSIC.

This sequence belongs to the disease resistance TIR-NB-LRR family. In terms of assembly, interacts with PopP2, a R.solanacearum type III effector. Interacts with RPS4.

Its subcellular location is the nucleus. It is found in the cytoplasm. Its function is as follows. Transcription factor. Interacts specifically with the W box (5'-(T)TGAC[CT]-3'), a frequently occurring elicitor-responsive cis-acting element. Also acts as a disease resistance protein involved in resistance to fungal and bacterial pathogens, including R.solanacearum, P.syringae pv. tomato and C.higginsianum. Heterodimerization with RPS4 is required to form a functional complex to recognize AvrRps4 and PopP2. Contributes to temperature-conditioned RPS4 auto-immunity. This is Disease resistance protein RRS1 from Arabidopsis thaliana (Mouse-ear cress).